A 322-amino-acid chain; its full sequence is Protein-methionine-sulfoxide reductase catalytic subunit MsrP (322 aa).

Residues 1–59 (MSFRDALNLPSSEITDESVYRDRRRLLQLLALTPALGVAGCAEADPPPPPKTVVTPAQA) constitute a signal peptide (tat-type signal). Mo-molybdopterin is bound by residues asparagine 79, 82 to 83 (YE), cysteine 137, threonine 172, asparagine 220, arginine 225, and 236 to 238 (SIK).

It belongs to the MsrP family. Heterodimer of a catalytic subunit (MsrP) and a heme-binding subunit (MsrQ). Mo-molybdopterin is required as a cofactor. In terms of processing, predicted to be exported by the Tat system. The position of the signal peptide cleavage has not been experimentally proven.

It is found in the periplasm. The catalysed reaction is L-methionyl-[protein] + a quinone + H2O = L-methionyl-(S)-S-oxide-[protein] + a quinol. The enzyme catalyses L-methionyl-[protein] + a quinone + H2O = L-methionyl-(R)-S-oxide-[protein] + a quinol. In terms of biological role, part of the MsrPQ system that repairs oxidized periplasmic proteins containing methionine sulfoxide residues (Met-O), using respiratory chain electrons. Thus protects these proteins from oxidative-stress damage caused by reactive species of oxygen and chlorine generated by the host defense mechanisms. MsrPQ is essential for the maintenance of envelope integrity under bleach stress, rescuing a wide series of structurally unrelated periplasmic proteins from methionine oxidation. The catalytic subunit MsrP is non-stereospecific, being able to reduce both (R-) and (S-) diastereoisomers of methionine sulfoxide. The polypeptide is Protein-methionine-sulfoxide reductase catalytic subunit MsrP (Xanthomonas axonopodis pv. citri (strain 306)).